A 190-amino-acid chain; its full sequence is Ribosome maturation factor RimP (190 aa).

Positions 159 to 190 (ELELAGGIPEGRVAPADADASEDEEVVEGLDK) are disordered. Positions 177-190 (DASEDEEVVEGLDK) are enriched in acidic residues.

Belongs to the RimP family.

It localises to the cytoplasm. Functionally, required for maturation of 30S ribosomal subunits. This is Ribosome maturation factor RimP from Rhodococcus opacus (strain B4).